Here is a 428-residue protein sequence, read N- to C-terminus: MRDEVAEKEKADINVTLVFQGYENTPIMVCVDGIVFSKPDLVTCLEQRKKPWSMKHPGLTQHNIVHTGDKPYKCKDCGKIFKWSSNLTIHQRIHSGEKPYKCEECGKAFKQSSKLNEHMRAHTGEKFYKCEECGKAFKHPSGLTLHKRIHTGENPYKFEECDKAFYWVLSFTKHMIIHRGEKPYKYQECGKAFKWSSNLTIHKRIHTGEKPCKCEECGKACKQSLGLTIQKRIHTEEKPYKCEECGSSNLTIYKKIHAGEKPYNCEKCGKAFYCSSNLIQNNIVHAEEKHYKCQECGKAFKKSLDLNVHKIIHSGEKPYRYEECGKITHSGEESYKCEECGKGFYCSSSLTKHMIVHTEEKLYKCEECGKAFKWSSELTIHQRIRTEEKPYKCEECVRVFKHSSKLNEHKRNHTGEKPYKCEACGKAF.

One can recognise a KRAB domain in the interval 1 to 64 (MRDEVAEKEK…KHPGLTQHNI (64 aa)). 3 consecutive C2H2-type zinc fingers follow at residues 72 to 94 (YKCKDCGKIFKWSSNLTIHQRIH), 100 to 122 (YKCEECGKAFKQSSKLNEHMRAH), and 128 to 150 (YKCEECGKAFKHPSGLTLHKRIH). The C2H2-type 4; degenerate zinc finger occupies 156-178 (YKFEECDKAFYWVLSFTKHMIIH). Residues 184–206 (YKYQECGKAFKWSSNLTIHKRIH) form a C2H2-type 5; degenerate zinc finger. A C2H2-type 6; degenerate zinc finger spans residues 212 to 234 (CKCEECGKACKQSLGLTIQKRIH). The segment at 263 to 285 (YNCEKCGKAFYCSSNLIQNNIVH) adopts a C2H2-type 7; degenerate zinc-finger fold. 2 consecutive C2H2-type zinc fingers follow at residues 291 to 313 (YKCQECGKAFKKSLDLNVHKIIH) and 335 to 357 (YKCEECGKGFYCSSSLTKHMIVH). The segment at 363–385 (YKCEECGKAFKWSSELTIHQRIR) adopts a C2H2-type 10; degenerate zinc-finger fold. The segment at 391–413 (YKCEECVRVFKHSSKLNEHKRNH) adopts a C2H2-type 11 zinc-finger fold.

The protein belongs to the krueppel C2H2-type zinc-finger protein family.

It is found in the nucleus. Functionally, may be involved in transcriptional regulation. The polypeptide is Putative zinc finger protein 355P (ZNF355P) (Homo sapiens (Human)).